A 407-amino-acid chain; its full sequence is MPVPSPMRLAVTHEGRSIIYIPSPEYAVASGRLEPAWLEVFYNPAMEFNRDVSVVAASALRRTGLLTRSGVAFDAHAGVGVRGVRYAVEAGYVKVIMNDINPKASMLAALNARANGLEPGSYMIFNKESNSLMFHLSRERPTPVSLIDIDPYGSPAPFVDAALALSGKGTVVAMTATDLAVLEGGKARAAVRRYMLRSVSKTPVSKETGLRVLLGYVARVAAAHDKAVKPLLAYYADHYYRVYVAVERGARRSDSMLEENLGRLVYCPETGVALALSYAEDPASACGGSYVVAADPAWIGSLGDQAFLEAMLNIAVEAVWLGTRPRVEKLLNTLHGEAPLSPRSIYVSLTSVASKARVNTPKKSKVVELLRSMGYRAVATHFSGEGVRTDAPWGEVLEAVVKLGSSG.

The Trm1 methyltransferase domain maps to 10 to 400; the sequence is AVTHEGRSII…APWGEVLEAV (391 aa). The S-adenosyl-L-methionine site is built by Arg-50, Arg-82, Asp-99, and Glu-128.

It belongs to the class I-like SAM-binding methyltransferase superfamily. Trm1 family.

The catalysed reaction is guanosine(26) in tRNA + 2 S-adenosyl-L-methionine = N(2)-dimethylguanosine(26) in tRNA + 2 S-adenosyl-L-homocysteine + 2 H(+). In terms of biological role, dimethylates a single guanine residue at position 26 of a number of tRNAs using S-adenosyl-L-methionine as donor of the methyl groups. The protein is tRNA (guanine(26)-N(2))-dimethyltransferase of Aeropyrum pernix (strain ATCC 700893 / DSM 11879 / JCM 9820 / NBRC 100138 / K1).